We begin with the raw amino-acid sequence, 348 residues long: Uroporphyrinogen decarboxylase (348 aa).

Residues 28 to 32 (RQAGR), D78, Y154, T209, and H325 contribute to the substrate site.

This sequence belongs to the uroporphyrinogen decarboxylase family. As to quaternary structure, homodimer.

The protein resides in the cytoplasm. The enzyme catalyses uroporphyrinogen III + 4 H(+) = coproporphyrinogen III + 4 CO2. It participates in porphyrin-containing compound metabolism; protoporphyrin-IX biosynthesis; coproporphyrinogen-III from 5-aminolevulinate: step 4/4. Catalyzes the decarboxylation of four acetate groups of uroporphyrinogen-III to yield coproporphyrinogen-III. The protein is Uroporphyrinogen decarboxylase of Rhodopseudomonas palustris (strain HaA2).